Reading from the N-terminus, the 128-residue chain is Fluoride-specific ion channel FluC (128 aa).

4 helical membrane passes run 2–22, 35–55, 67–87, and 96–116; these read FYSI…RWCL, LGTL…AVVF, LFVI…SVEV, and FGWA…LTAL. Glycine 75 and threonine 78 together coordinate Na(+).

This sequence belongs to the fluoride channel Fluc/FEX (TC 1.A.43) family.

The protein localises to the cell inner membrane. It catalyses the reaction fluoride(in) = fluoride(out). With respect to regulation, na(+) is not transported, but it plays an essential structural role and its presence is essential for fluoride channel function. In terms of biological role, fluoride-specific ion channel. Important for reducing fluoride concentration in the cell, thus reducing its toxicity. This Burkholderia cenocepacia (strain ATCC BAA-245 / DSM 16553 / LMG 16656 / NCTC 13227 / J2315 / CF5610) (Burkholderia cepacia (strain J2315)) protein is Fluoride-specific ion channel FluC.